Here is a 350-residue protein sequence, read N- to C-terminus: Protein RecA (350 aa).

67 to 74 (GPESSGKT) is an ATP binding site.

Belongs to the RecA family.

The protein resides in the cytoplasm. In terms of biological role, can catalyze the hydrolysis of ATP in the presence of single-stranded DNA, the ATP-dependent uptake of single-stranded DNA by duplex DNA, and the ATP-dependent hybridization of homologous single-stranded DNAs. It interacts with LexA causing its activation and leading to its autocatalytic cleavage. This is Protein RecA from Wolinella succinogenes (strain ATCC 29543 / DSM 1740 / CCUG 13145 / JCM 31913 / LMG 7466 / NCTC 11488 / FDC 602W) (Vibrio succinogenes).